A 450-amino-acid chain; its full sequence is Interferon-related developmental regulator 1 (450 aa).

Basic residues predominate over residues 1-10 (MPKNKKRNTP). Residues 1-46 (MPKNKKRNTPHRGGSGGGGSGAAATTAATAGGQHRNVQPFSDEDAS) are disordered. The segment covering 22 to 32 (AAATTAATAGG) has biased composition (low complexity).

This sequence belongs to the IFRD family. Interacts with PSIP1/LEDGF.

In terms of biological role, could play a role in regulating gene activity in the proliferative and/or differentiative pathways induced by NGF. May be an autocrine factor that attenuates or amplifies the initial ligand-induced signal. The polypeptide is Interferon-related developmental regulator 1 (IFRD1) (Sus scrofa (Pig)).